Consider the following 276-residue polypeptide: NADPH-dependent 7-cyano-7-deazaguanine reductase (276 aa).

Residue 80 to 82 participates in substrate binding; sequence VES. Residue 82–83 participates in NADPH binding; sequence SK. Catalysis depends on Cys-183, which acts as the Thioimide intermediate. Asp-190 acts as the Proton donor in catalysis. 222 to 223 provides a ligand contact to substrate; sequence HE. 251-252 provides a ligand contact to NADPH; the sequence is RG.

Belongs to the GTP cyclohydrolase I family. QueF type 2 subfamily. In terms of assembly, homodimer.

Its subcellular location is the cytoplasm. It catalyses the reaction 7-aminomethyl-7-carbaguanine + 2 NADP(+) = 7-cyano-7-deazaguanine + 2 NADPH + 3 H(+). Its pathway is tRNA modification; tRNA-queuosine biosynthesis. In terms of biological role, catalyzes the NADPH-dependent reduction of 7-cyano-7-deazaguanine (preQ0) to 7-aminomethyl-7-deazaguanine (preQ1). The sequence is that of NADPH-dependent 7-cyano-7-deazaguanine reductase from Burkholderia orbicola (strain MC0-3).